The chain runs to 456 residues: Cysteine--tRNA ligase (456 aa).

Cys-29 contributes to the Zn(2+) binding site. Residues 31–41 carry the 'HIGH' region motif; the sequence is VTVYDYCHVGH. Cys-210, His-235, and Glu-239 together coordinate Zn(2+). Positions 267–271 match the 'KMSKS' region motif; the sequence is KMSKS. Lys-270 provides a ligand contact to ATP.

Belongs to the class-I aminoacyl-tRNA synthetase family. In terms of assembly, monomer. The cofactor is Zn(2+).

It is found in the cytoplasm. The enzyme catalyses tRNA(Cys) + L-cysteine + ATP = L-cysteinyl-tRNA(Cys) + AMP + diphosphate. This chain is Cysteine--tRNA ligase, found in Hydrogenovibrio crunogenus (strain DSM 25203 / XCL-2) (Thiomicrospira crunogena).